Consider the following 490-residue polypeptide: Tryptophan decarboxylase (490 aa).

Position 306 is an N6-(pyridoxal phosphate)lysine (Lys306).

Belongs to the group II decarboxylase family. Homodimer. The cofactor is pyridoxal 5'-phosphate.

It localises to the cytoplasm. The catalysed reaction is L-tryptophan + H(+) = tryptamine + CO2. Its activity is regulated as follows. Inhibited by (S)-alpha-fluoromethyltryptophan. Catalyzes the decarboxylation of tryptophan to tryptamine. Tryptamine is a neurotransmitter that induces the release of serotonin, which is suggested to modulate gastrointestinal motility. Therefore, the tryptophan decarboxylase from the gut bacteria Ruminococcus gnavus (strain ATCC 29149 / VPI C7-9) may influence host brain and behavior. Has weak activity with tyrosine and phenylalanine. The sequence is that of Tryptophan decarboxylase from Mediterraneibacter gnavus (strain ATCC 29149 / DSM 114966 / JCM 6515 / VPI C7-9) (Ruminococcus gnavus).